A 100-amino-acid chain; its full sequence is Small ribosomal subunit protein uS14c (100 aa).

Belongs to the universal ribosomal protein uS14 family. Part of the 30S ribosomal subunit.

The protein resides in the plastid. It localises to the chloroplast. Binds 16S rRNA, required for the assembly of 30S particles. In Lotus japonicus (Lotus corniculatus var. japonicus), this protein is Small ribosomal subunit protein uS14c.